Consider the following 299-residue polypeptide: Nicotinate-nucleotide pyrophosphorylase [carboxylating] (299 aa).

The segment at 8 to 12 (HLLPP) is important for hexamer formation. Residues Arg-102, 138-139 (RK), 160-161 (HR), Lys-171, Glu-201, Asp-222, 248-250 (SGG), and Gly-270 contribute to the quinolinate site. The residue at position 291 (Thr-291) is a Phosphothreonine.

This sequence belongs to the NadC/ModD family. In terms of assembly, hexamer formed by 3 homodimers.

It catalyses the reaction nicotinate beta-D-ribonucleotide + CO2 + diphosphate = quinolinate + 5-phospho-alpha-D-ribose 1-diphosphate + 2 H(+). The protein operates within cofactor biosynthesis; NAD(+) biosynthesis; nicotinate D-ribonucleotide from quinolinate: step 1/1. Functionally, involved in the catabolism of quinolinic acid (QA). This chain is Nicotinate-nucleotide pyrophosphorylase [carboxylating] (QPRT), found in Bos taurus (Bovine).